Here is a 153-residue protein sequence, read N- to C-terminus: UPF0260 protein YcgN (153 aa).

The protein belongs to the UPF0260 family.

The chain is UPF0260 protein YcgN from Shigella flexneri serotype 5b (strain 8401).